Consider the following 306-residue polypeptide: RNA pseudouridylate synthase domain-containing protein 1 (306 aa).

Met-1 is subject to N-acetylmethionine. The active site involves Asp-67. Positions 255–290 (RTDPDPDPMSGGPRPCSPSTPQPRPGRPPPETEAQR) are disordered. Positions 269 to 285 (PCSPSTPQPRPGRPPPE) are enriched in pro residues.

This sequence belongs to the pseudouridine synthase RluA family.

The polypeptide is RNA pseudouridylate synthase domain-containing protein 1 (Rpusd1) (Mus musculus (Mouse)).